A 217-amino-acid polypeptide reads, in one-letter code: GTP cyclohydrolase-2 (217 aa).

Residue arginine 50–glutamate 54 coordinates GTP. The Zn(2+) site is built by cysteine 55, cysteine 66, and cysteine 68. Residues glutamine 71, glutamate 93–arginine 95, and threonine 115 contribute to the GTP site. Residue aspartate 127 is the Proton acceptor of the active site. Catalysis depends on arginine 129, which acts as the Nucleophile. GTP-binding residues include threonine 150 and lysine 155.

Belongs to the GTP cyclohydrolase II family. Zn(2+) serves as cofactor.

It carries out the reaction GTP + 4 H2O = 2,5-diamino-6-hydroxy-4-(5-phosphoribosylamino)-pyrimidine + formate + 2 phosphate + 3 H(+). It participates in cofactor biosynthesis; riboflavin biosynthesis; 5-amino-6-(D-ribitylamino)uracil from GTP: step 1/4. Catalyzes the conversion of GTP to 2,5-diamino-6-ribosylamino-4(3H)-pyrimidinone 5'-phosphate (DARP), formate and pyrophosphate. This is GTP cyclohydrolase-2 from Actinobacillus succinogenes (strain ATCC 55618 / DSM 22257 / CCUG 43843 / 130Z).